We begin with the raw amino-acid sequence, 146 residues long: Multiple coagulation factor deficiency protein 2 (146 aa).

Residues 1–26 (MTMRSLLRTPFLCGLLWAFCAPGARA) form the signal peptide. An EF-hand 1 domain is found at 68-103 (SPQELQLHYFKMHDYDGNNLLDGLELSTAITHVHKE). Ca(2+)-binding residues include aspartate 81, aspartate 83, asparagine 85, and glutamate 92. Position 106 is a phosphoserine (serine 106). Residues 116–146 (ELINIIDGVLRDDDKNNDGYIDYAEFAKSLQ) form the EF-hand 2 domain. Residues aspartate 129, asparagine 131, aspartate 133, tyrosine 135, and glutamate 140 each contribute to the Ca(2+) site.

As to quaternary structure, interacts in a calcium-dependent manner with LMAN1.

The protein resides in the endoplasmic reticulum-Golgi intermediate compartment. It localises to the endoplasmic reticulum. It is found in the golgi apparatus. Functionally, the MCFD2-LMAN1 complex forms a specific cargo receptor for the ER-to-Golgi transport of selected proteins. Plays a role in the secretion of coagulation factors. The polypeptide is Multiple coagulation factor deficiency protein 2 (MCFD2) (Homo sapiens (Human)).